The sequence spans 318 residues: MTCPIILDCDPGHDDAIALILALAHPDLVPLAVTTSAGNQTPDKTLNNALRILTLLNRSDIPVAGGAAKPLARDLIIADNVHGETGLDGPALPNPSFSPQAITAVELMAQQIRKSHQPVTLIPTGPLTNIALLLASHSELHDKIERIVLMGGAAGVGNWTPAAEFNIFVDPEAADIVFKSGIPITMCGLDVTHQAQIMDEDIERIRAIPNPVAKCVAELLDFFMIYHRDPKWGFVGAPLHDPCTIAWLLKPELFDAQDCWVGIETQSELTLGMTVVDRYQLTGKPANATVLFGLNRQGFVDLLVHSLAAYTPTYLNRR.

His240 is a catalytic residue.

This sequence belongs to the IUNH family. RihA subfamily.

Its function is as follows. Hydrolyzes cytidine or uridine to ribose and cytosine or uracil, respectively. The polypeptide is Pyrimidine-specific ribonucleoside hydrolase RihA (Shewanella oneidensis (strain ATCC 700550 / JCM 31522 / CIP 106686 / LMG 19005 / NCIMB 14063 / MR-1)).